Here is a 435-residue protein sequence, read N- to C-terminus: NADH-quinone oxidoreductase subunit D (435 aa).

This sequence belongs to the complex I 49 kDa subunit family. NDH-1 is composed of 14 different subunits. Subunits NuoB, C, D, E, F, and G constitute the peripheral sector of the complex.

It is found in the cell inner membrane. It carries out the reaction a quinone + NADH + 5 H(+)(in) = a quinol + NAD(+) + 4 H(+)(out). NDH-1 shuttles electrons from NADH, via FMN and iron-sulfur (Fe-S) centers, to quinones in the respiratory chain. The immediate electron acceptor for the enzyme in this species is believed to be ubiquinone. Couples the redox reaction to proton translocation (for every two electrons transferred, four hydrogen ions are translocated across the cytoplasmic membrane), and thus conserves the redox energy in a proton gradient. This chain is NADH-quinone oxidoreductase subunit D, found in Xylella fastidiosa (strain 9a5c).